The following is a 500-amino-acid chain: Protein O-glucosyltransferase 2 (500 aa).

Residues Met1–Ala22 form the signal peptide. The stretch at Ala23–Arg128 is one Filamin repeat. 2 N-linked (GlcNAc...) asparagine glycosylation sites follow: Asn60 and Asn259. The short motif at Arg497–Leu500 is the Prevents secretion from ER element.

This sequence belongs to the KDELC family.

The protein localises to the endoplasmic reticulum lumen. The enzyme catalyses L-seryl-[EGF-like domain protein] + UDP-alpha-D-glucose = 3-O-(beta-D-glucosyl)-L-seryl-[EGF-like domain protein] + UDP + H(+). It carries out the reaction L-seryl-[EGF-like domain protein] + UDP-alpha-D-xylose = 3-O-(beta-D-xylosyl)-L-seryl-[EGF-like domain protein] + UDP + H(+). Its pathway is protein modification; protein glycosylation. In terms of biological role, protein glucosyltransferase that catalyzes the transfer of glucose from UDP-glucose to a serine residue within the consensus sequence peptide C-X-N-T-X-G-S-F-X-C. Can also catalyze the transfer of xylose from UDP-xylose but less efficiently. This chain is Protein O-glucosyltransferase 2 (poglut2), found in Danio rerio (Zebrafish).